The primary structure comprises 786 residues: AT-rich interactive domain-containing protein 3 (786 aa).

Low complexity predominate over residues 1 to 16 (MENLTEIESTMESLTE). 3 disordered regions span residues 1–182 (MENL…HHAD), 199–251 (SGDH…IPAN), and 395–420 (DTTVDSTNNKDAHVEANTERQDNSSA). Basic and acidic residues-rich tracts occupy residues 18–64 (ESER…HEDS) and 87–97 (DLPKIDDEKNS). Residues 130–139 (ENIVSSEVSS) are compositionally biased toward low complexity. 5 stretches are compositionally biased toward basic and acidic residues: residues 141-156 (ILKDDGDAVEVDRDTA), 169-182 (KLSEDTGSPHHHAD), 199-219 (SGDHEEFPVNPDNKHSEENQS), 234-248 (AEEREIISPGEHKEI), and 402-416 (NNKDAHVEANTERQD). Positions 494 to 585 (EEDQSAFMKE…ALLEYERHKV (92 aa)) constitute an ARID domain. Residues 606–638 (QASGSGRARRDAASRAMQGWHSQRLNGNGEVSD) are disordered. One can recognise a sHSP domain in the interval 686–786 (VTVVDVGPPA…FVRVPLEQLE (101 aa)).

This sequence belongs to the small heat shock protein (HSP20) family.

The protein resides in the nucleus. The polypeptide is AT-rich interactive domain-containing protein 3 (ARID3) (Arabidopsis thaliana (Mouse-ear cress)).